Here is a 542-residue protein sequence, read N- to C-terminus: Bifunctional pantoate ligase/cytidylate kinase (542 aa).

The segment at M1 to L280 is pantoate--beta-alanine ligase. M28–H35 provides a ligand contact to ATP. Catalysis depends on H35, which acts as the Proton donor. Residue Q59 coordinates (R)-pantoate. Q59 provides a ligand contact to beta-alanine. G150–D153 contributes to the ATP binding site. A (R)-pantoate-binding site is contributed by Q156. Residues V179 and C187–R190 each bind ATP. Positions L281–Q542 are cytidylate kinase. A disordered region spans residues G287–P311.

It in the N-terminal section; belongs to the pantothenate synthetase family. In the C-terminal section; belongs to the cytidylate kinase family. Type 1 subfamily.

The protein localises to the cytoplasm. It carries out the reaction (R)-pantoate + beta-alanine + ATP = (R)-pantothenate + AMP + diphosphate + H(+). The catalysed reaction is CMP + ATP = CDP + ADP. The enzyme catalyses dCMP + ATP = dCDP + ADP. It participates in cofactor biosynthesis; (R)-pantothenate biosynthesis; (R)-pantothenate from (R)-pantoate and beta-alanine: step 1/1. In terms of biological role, catalyzes the condensation of pantoate with beta-alanine in an ATP-dependent reaction via a pantoyl-adenylate intermediate. Catalyzes the transfer of a phosphate group from ATP to either CMP or dCMP to form CDP or dCDP and ADP, respectively. This is Bifunctional pantoate ligase/cytidylate kinase from Synechococcus sp. (strain JA-2-3B'a(2-13)) (Cyanobacteria bacterium Yellowstone B-Prime).